A 379-amino-acid polypeptide reads, in one-letter code: tRNA-specific 2-thiouridylase MnmA (379 aa).

Residues 16 to 23 (GLSGGVDS) and Met-42 each bind ATP. Positions 102–104 (NPD) are interaction with target base in tRNA. Cys-107 (nucleophile) is an active-site residue. Cysteines 107 and 204 form a disulfide. ATP is bound at residue Gly-131. The interaction with tRNA stretch occupies residues 154-156 (KDQ). Residue Cys-204 is the Cysteine persulfide intermediate of the active site. Positions 316 to 317 (RY) are interaction with tRNA.

This sequence belongs to the MnmA/TRMU family.

The protein localises to the cytoplasm. The enzyme catalyses S-sulfanyl-L-cysteinyl-[protein] + uridine(34) in tRNA + AH2 + ATP = 2-thiouridine(34) in tRNA + L-cysteinyl-[protein] + A + AMP + diphosphate + H(+). Its function is as follows. Catalyzes the 2-thiolation of uridine at the wobble position (U34) of tRNA, leading to the formation of s(2)U34. This chain is tRNA-specific 2-thiouridylase MnmA, found in Hydrogenovibrio crunogenus (strain DSM 25203 / XCL-2) (Thiomicrospira crunogena).